Reading from the N-terminus, the 523-residue chain is Leghemoglobin reductase (523 aa).

A mitochondrion-targeting transit peptide spans 1–30 (MAMASLARRKAYAVVSSSRSSVFLTSLRGF). Residues 66 to 75 (EKRGTLGGTC), Lys-84, Gly-148, and 177 to 179 (TGS) contribute to the FAD site. Cys-75 and Cys-80 are disulfide-bonded. NAD(+) is bound by residues 214-221 (GAGYIGLE), Glu-237, Val-271, and Gly-306. FAD is bound by residues Asp-347 and 353–356 (MLAH). Catalysis depends on His-479, which acts as the Proton acceptor.

The protein belongs to the class-I pyridine nucleotide-disulfide oxidoreductase family. As to quaternary structure, homodimer. FAD serves as cofactor.

Its subcellular location is the mitochondrion. It catalyses the reaction 2 Fe(III)-[leghemoglobin] + NADH = 2 Fe(II)-[leghemoglobin] + NAD(+) + H(+). The catalysed reaction is 2 Fe(III)-[leghemoglobin] + NADPH = 2 Fe(II)-[leghemoglobin] + NADP(+) + H(+). Functionally, reduces ferric leghemoglobin (Lb) to ferrous Lb. This is Leghemoglobin reductase (FLBR) from Vigna unguiculata (Cowpea).